The chain runs to 534 residues: Acyl-CoA-binding domain-containing protein 5 (534 aa).

Residues 41 to 130 (HETRFEAAVK…MKKIIETMPM (90 aa)) form the ACB domain. An an acyl-CoA-binding site is contributed by 52–61 (IQSLPKNGSF). Phosphothreonine is present on Pro-63. Residues 72–76 (YSFYK), Lys-98, and Tyr-117 each bind an acyl-CoA. Phosphothreonine occurs at positions 137 and 172. Residues 181–225 (TPNAKTVNGKAESSDSGAESEEEEAQEEVKGAEQSDNDKKMMKKS) form a disordered region. The stretch at 190–219 (KAESSDSGAESEEEEAQEEVKGAEQSDNDK) forms a coiled coil. 7 positions are modified to phosphoserine: Ser-193, Ser-194, Ser-196, Ser-200, Ser-215, Ser-279, and Ser-313. A compositionally biased stretch (basic and acidic residues) spans 207–225 (EEVKGAEQSDNDKKMMKKS). Basic and acidic residues predominate over residues 376 to 385 (EVKHGGEDGR). The interval 376–442 (EVKHGGEDGR…ERWGSDRGSR (67 aa)) is disordered. Thr-400 carries the post-translational modification Phosphothreonine. Ser-428 is modified (phosphoserine). Residues 431–441 (DGERWGSDRGS) are compositionally biased toward basic and acidic residues. A coiled-coil region spans residues 447–476 (EQIALVLMRLQEDMQNVLQRLQKLETLTAL). The residue at position 469 (Lys-469) is an N6-acetyllysine. The helical transmembrane segment at 506-526 (GVLTFAIIWPFIAQWLVYLYY) threads the bilayer.

Belongs to the ATG37 family.

It is found in the peroxisome membrane. Functionally, acyl-CoA binding protein which acts as the peroxisome receptor for pexophagy but is dispensable for aggrephagy and nonselective autophagy. Binds medium- and long-chain acyl-CoA esters. This is Acyl-CoA-binding domain-containing protein 5 (ACBD5) from Homo sapiens (Human).